A 506-amino-acid polypeptide reads, in one-letter code: Histidine ammonia-lyase (506 aa).

A cross-link (5-imidazolinone (Ala-Gly)) is located at residues 143–145 (ASG). Ser-144 bears the 2,3-didehydroalanine (Ser) mark.

The protein belongs to the PAL/histidase family. In terms of processing, contains an active site 4-methylidene-imidazol-5-one (MIO), which is formed autocatalytically by cyclization and dehydration of residues Ala-Ser-Gly.

Its subcellular location is the cytoplasm. It catalyses the reaction L-histidine = trans-urocanate + NH4(+). It functions in the pathway amino-acid degradation; L-histidine degradation into L-glutamate; N-formimidoyl-L-glutamate from L-histidine: step 1/3. The polypeptide is Histidine ammonia-lyase (Salmonella gallinarum (strain 287/91 / NCTC 13346)).